The following is a 101-amino-acid chain: Urease subunit beta (101 aa).

It belongs to the urease beta subunit family. Heterotrimer of UreA (gamma), UreB (beta) and UreC (alpha) subunits. Three heterotrimers associate to form the active enzyme.

The protein localises to the cytoplasm. It carries out the reaction urea + 2 H2O + H(+) = hydrogencarbonate + 2 NH4(+). The protein operates within nitrogen metabolism; urea degradation; CO(2) and NH(3) from urea (urease route): step 1/1. This is Urease subunit beta from Cereibacter sphaeroides (strain ATCC 17029 / ATH 2.4.9) (Rhodobacter sphaeroides).